The sequence spans 416 residues: D-amino acid dehydrogenase (416 aa).

An FAD-binding site is contributed by 3–17; the sequence is ITILGSGVIGVTTAY.

The protein belongs to the DadA oxidoreductase family. FAD serves as cofactor.

The enzyme catalyses a D-alpha-amino acid + A + H2O = a 2-oxocarboxylate + AH2 + NH4(+). The protein operates within amino-acid degradation; D-alanine degradation; NH(3) and pyruvate from D-alanine: step 1/1. In terms of biological role, oxidative deamination of D-amino acids. The chain is D-amino acid dehydrogenase from Brucella anthropi (strain ATCC 49188 / DSM 6882 / CCUG 24695 / JCM 21032 / LMG 3331 / NBRC 15819 / NCTC 12168 / Alc 37) (Ochrobactrum anthropi).